The chain runs to 353 residues: D-glycerol 3-phosphate phosphatase (353 aa).

Residue D14 is the Nucleophile of the active site. D14, D16, and D209 together coordinate Mg(2+). D16 functions as the Proton donor in the catalytic mechanism.

The protein belongs to the HAD-like hydrolase superfamily. In terms of assembly, homodimer. Mg(2+) is required as a cofactor. Requires Co(2+) as cofactor. The cofactor is Mn(2+).

The catalysed reaction is sn-glycerol 1-phosphate + H2O = glycerol + phosphate. Its pathway is glycerolipid metabolism. In terms of biological role, dephosphorylates D-glycerol 3-phosphate (sn-glycerol 1-phosphate). Is the final enzyme involved in the recycling/catabolism of glycerophospholipid polar heads. To a lesser extent, is also able to act on glycerol 2-phosphate and D-ribulose 5-phosphate, but cannot use D-glyceraldehyde 3-phosphate, dihydroxyacetone-phosphate, UMP or GMP as substrates. This Mycobacterium tuberculosis (strain ATCC 25618 / H37Rv) protein is D-glycerol 3-phosphate phosphatase.